Reading from the N-terminus, the 58-residue chain is UPF0434 protein Sfri_2386 (58 aa).

Belongs to the UPF0434 family.

This is UPF0434 protein Sfri_2386 from Shewanella frigidimarina (strain NCIMB 400).